The sequence spans 284 residues: 2-dehydro-3-deoxyphosphooctonate aldolase (284 aa).

Belongs to the KdsA family.

The protein resides in the cytoplasm. It carries out the reaction D-arabinose 5-phosphate + phosphoenolpyruvate + H2O = 3-deoxy-alpha-D-manno-2-octulosonate-8-phosphate + phosphate. Its pathway is carbohydrate biosynthesis; 3-deoxy-D-manno-octulosonate biosynthesis; 3-deoxy-D-manno-octulosonate from D-ribulose 5-phosphate: step 2/3. It participates in bacterial outer membrane biogenesis; lipopolysaccharide biosynthesis. In Serratia proteamaculans (strain 568), this protein is 2-dehydro-3-deoxyphosphooctonate aldolase.